A 292-amino-acid polypeptide reads, in one-letter code: MIETRTTTSTSEIKHDNSLKTGFEITKEVEEFRNYENSEDRVSEAYRNSHTYQTYDYATEKKKQYSQLDTSIKMGLWEAAELLNTIIDESDPDSNIPQINHCLQTAEAIRKVYPDSKYDWFHLTGFIHDLGKVLLSKKFKEQPQWATVGDTFPLGCKFDESNIFYEFFKMNPDYNDSKYNSECGIYKKNIGLENVTMSWGHDEYFYLVCVGNKCLLPKESLYMIRFHSFYPWHRHNKYTHLTNEEDEKMLNWVKEFNKFDLYSKDSEPVDVESLKPYYQSLISKYFPNELHW.

Residues Arg-33 and 88–90 (DES) contribute to the substrate site. Fe cation contacts are provided by His-101, His-128, and Asp-129. Substrate-binding positions include Lys-132 and 149–150 (GD). Residues His-201, His-227, and Asp-260 each contribute to the Fe cation site. 227-228 (HS) contacts substrate.

The protein belongs to the myo-inositol oxygenase family. Fe cation is required as a cofactor.

The protein localises to the cytoplasm. The enzyme catalyses myo-inositol + O2 = D-glucuronate + H2O + H(+). The protein operates within polyol metabolism; myo-inositol degradation into D-glucuronate; D-glucuronate from myo-inositol: step 1/1. This chain is Inositol oxygenase (miox), found in Dictyostelium discoideum (Social amoeba).